A 346-amino-acid polypeptide reads, in one-letter code: Zinc transporter YKE4 (346 aa).

The Extracellular portion of the chain corresponds to 1–2 (MK). Residues 3 to 23 (ASHICSYLLSIAPLVVSHGVH) traverse the membrane as a helical segment. The Cytoplasmic segment spans residues 24-69 (HNRDHGHEANHESKQSFLILKQESIFYSLVCFLQNHLFVLGPRYNA). A helical membrane pass occupies residues 70-90 (IVAILIIQLMPCLFVLFVPGL). The Extracellular portion of the chain corresponds to 91–99 (RKNDRASLT). The chain crosses the membrane as a helical span at residues 100–120 (LSLLVSFSLGTLLGDILLHVI). The Cytoplasmic portion of the chain corresponds to 121 to 126 (PESLSG). The chain crosses the membrane as a helical span at residues 127–147 (VTDVTMVGGAIFLGFISFLTL). At 148 to 202 (DKTMRILSGTSNDDGSIHSHSHSHTPQQTAEKKAGFNMSAYLNVISGIAHHITDG) the chain is on the extracellular side. N-linked (GlcNAc...) asparagine glycosylation occurs at Asn-184. Residues 203–223 (IALATSFYSSTQVGIMTSIAV) traverse the membrane as a helical segment. The Cytoplasmic portion of the chain corresponds to 224–252 (TFHEIPHELGDFAILLSSGFTFPQAIRAQ). A helical transmembrane segment spans residues 253-273 (AVTAFGAVVGTSIGCWMNEIG). Residues Asn-274 and Asn-285 are each glycosylated (N-linked (GlcNAc...) asparagine). The Extracellular portion of the chain corresponds to 274–290 (NNSHKATSSSANASELM). Residues 291–311 (LPFTAGGLIYIATTSVVPQIL) form a helical membrane-spanning segment. Residues 312 to 322 (HSSAPDSKLRE) lie on the Cytoplasmic side of the membrane. Residues 323 to 343 (FKKWALQLVFIFVGFAVMALM) form a helical membrane-spanning segment. Topologically, residues 344 to 346 (DEH) are extracellular.

This sequence belongs to the ZIP transporter (TC 2.A.5) family. KE4/Catsup subfamily.

The protein localises to the endoplasmic reticulum membrane. In terms of biological role, zinc transporter whose role depends on the zinc status of the cells. It helps to balance zinc levels between the cytosol and the secretory pathway. It transports zinc into the secretory pathway in a zinc-adequate environment and in a high zinc medium. In high zinc medium, transport of zinc into the secretory pathway is a way to eliminate zinc from the cytosol. Under low cytosolic zinc conditions, it removes zinc from the secretory pathway and acts as a zinc importer that helps to alleviate ER stress. The protein is Zinc transporter YKE4 (YKE4) of Saccharomyces cerevisiae (strain ATCC 204508 / S288c) (Baker's yeast).